A 1026-amino-acid polypeptide reads, in one-letter code: Multidrug resistance protein MdtC (1026 aa).

Transmembrane regions (helical) follow at residues 15-35, 333-353, 360-380, 387-407, 431-451, 463-483, 528-548, 853-873, 897-917, 953-973, and 984-1004; these read ILIA…LPVA, EVEE…FLFL, LIPA…MYLC, LSLM…IVVL, VGFT…PLLL, FAVT…TLTP, LVGV…IAIP, LILI…LYES, LFNA…IGIV, PIMM…LSGG, and ITIV…TPVV.

The protein belongs to the resistance-nodulation-cell division (RND) (TC 2.A.6) family. MdtC subfamily. Part of a tripartite efflux system composed of MdtA, MdtB and MdtC. MdtC forms a heteromultimer with MdtB.

The protein localises to the cell inner membrane. This is Multidrug resistance protein MdtC from Salmonella dublin (strain CT_02021853).